The primary structure comprises 349 residues: D-alanine--D-alanine ligase (349 aa).

The ATP-grasp domain maps to 132–335 (KHVFEAVGVP…YSDLIEKLVD (204 aa)). 162–217 (VEKLEFPVFVKPANMGSSVGISKVDDLADLQPALSEAYKYDNRVVIEQGVDAREIE) is a binding site for ATP. Residues Asp289, Glu302, and Asn304 each coordinate Mg(2+).

It belongs to the D-alanine--D-alanine ligase family. The cofactor is Mg(2+). Requires Mn(2+) as cofactor.

It localises to the cytoplasm. The enzyme catalyses 2 D-alanine + ATP = D-alanyl-D-alanine + ADP + phosphate + H(+). The protein operates within cell wall biogenesis; peptidoglycan biosynthesis. Functionally, cell wall formation. This is D-alanine--D-alanine ligase from Lactococcus lactis subsp. lactis (strain IL1403) (Streptococcus lactis).